A 430-amino-acid polypeptide reads, in one-letter code: UDP-N-acetylglucosamine 1-carboxyvinyltransferase 1 (430 aa).

Residue 22 to 23 (KN) coordinates phosphoenolpyruvate. A UDP-N-acetyl-alpha-D-glucosamine-binding site is contributed by R102. Catalysis depends on C126, which acts as the Proton donor. C126 carries the 2-(S-cysteinyl)pyruvic acid O-phosphothioketal modification. UDP-N-acetyl-alpha-D-glucosamine-binding positions include 131–135 (RPVDL), 172–175 (KVSV), D317, and I339.

Belongs to the EPSP synthase family. MurA subfamily.

The protein resides in the cytoplasm. It carries out the reaction phosphoenolpyruvate + UDP-N-acetyl-alpha-D-glucosamine = UDP-N-acetyl-3-O-(1-carboxyvinyl)-alpha-D-glucosamine + phosphate. The protein operates within cell wall biogenesis; peptidoglycan biosynthesis. Cell wall formation. Adds enolpyruvyl to UDP-N-acetylglucosamine. The protein is UDP-N-acetylglucosamine 1-carboxyvinyltransferase 1 of Mesorhizobium japonicum (strain LMG 29417 / CECT 9101 / MAFF 303099) (Mesorhizobium loti (strain MAFF 303099)).